We begin with the raw amino-acid sequence, 967 residues long: Aminopeptidase N (967 aa).

Over 2 to 8 (AKGFYIS) the chain is Cytoplasmic. Residues 9–32 (KSLGILGILLGVAAVCTIIALSVV) traverse the membrane as a helical; Signal-anchor for type II membrane protein segment. The tract at residues 33-68 (YSQEKNKNANSSPVASTTPSASATTNPASATTLDQS) is cytosolic Ser/Thr-rich junction. Over 33–967 (YSQEKNKNAN…VLQWFTENSK (935 aa)) the chain is Extracellular. Residues 40 to 62 (NANSSPVASTTPSASATTNPASA) are disordered. The segment covering 41–62 (ANSSPVASTTPSASATTNPASA) has biased composition (low complexity). The segment at 69–967 (KAWNRYRLPN…VLQWFTENSK (899 aa)) is metalloprotease. Asparagine 128 carries an N-linked (GlcNAc...) asparagine glycan. At tyrosine 176 the chain carries Sulfotyrosine. N-linked (GlcNAc...) asparagine glycosylation is found at asparagine 234 and asparagine 265. The tract at residues 288-295 (DYVEKQAS) is necessary and sufficient to mediate interaction with HCoV-229E. Asparagine 319 carries N-linked (GlcNAc...) asparagine glycosylation. 352-356 (GAMEN) lines the substrate pocket. Histidine 388 provides a ligand contact to Zn(2+). Glutamate 389 serves as the catalytic Proton acceptor. Residues histidine 392 and glutamate 411 each coordinate Zn(2+). A sulfotyrosine mark is found at tyrosine 419 and tyrosine 424. 5 N-linked (GlcNAc...) asparagine glycosylation sites follow: asparagine 527, asparagine 573, asparagine 625, asparagine 681, and asparagine 735. 2 cysteine pairs are disulfide-bonded: cysteine 761–cysteine 768 and cysteine 798–cysteine 834. Residue asparagine 818 is glycosylated (N-linked (GlcNAc...) asparagine). Sulfotyrosine is present on tyrosine 913.

Belongs to the peptidase M1 family. In terms of assembly, homodimer. Interacts with SLC6A19. As to quaternary structure, (Microbial infection) Interacts with the S1 domain of human coronavirus 229E/HCoV-229E spike protein. It depends on Zn(2+) as a cofactor. Post-translationally, sulfated. In terms of processing, N- and O-glycosylated. May undergo proteolysis and give rise to a soluble form. Expressed in epithelial cells of the kidney, intestine, and respiratory tract; granulocytes, monocytes, fibroblasts, endothelial cells, cerebral pericytes at the blood-brain barrier, synaptic membranes of cells in the CNS. Also expressed in endometrial stromal cells, but not in the endometrial glandular cells. Found in the vasculature of tissues that undergo angiogenesis and in malignant gliomas and lymph node metastases from multiple tumor types but not in blood vessels of normal tissues. A soluble form has been found in plasma. It is found to be elevated in plasma and effusions of cancer patients.

It is found in the cell membrane. The catalysed reaction is Release of an N-terminal amino acid, Xaa-|-Yaa- from a peptide, amide or arylamide. Xaa is preferably Ala, but may be most amino acids including Pro (slow action). When a terminal hydrophobic residue is followed by a prolyl residue, the two may be released as an intact Xaa-Pro dipeptide.. Broad specificity aminopeptidase which plays a role in the final digestion of peptides generated from hydrolysis of proteins by gastric and pancreatic proteases. Also involved in the processing of various peptides including peptide hormones, such as angiotensin III and IV, neuropeptides, and chemokines. May also be involved the cleavage of peptides bound to major histocompatibility complex class II molecules of antigen presenting cells. May have a role in angiogenesis and promote cholesterol crystallization. May have a role in amino acid transport by acting as binding partner of amino acid transporter SLC6A19 and regulating its activity. In terms of biological role, (Microbial infection) Acts as a receptor for human coronavirus 229E/HCoV-229E. In case of human coronavirus 229E (HCoV-229E) infection, serves as receptor for HCoV-229E spike glycoprotein. Its function is as follows. (Microbial infection) Mediates as well Human cytomegalovirus (HCMV) infection. This is Aminopeptidase N (ANPEP) from Homo sapiens (Human).